The primary structure comprises 227 residues: UPF0173 metal-dependent hydrolase BCB4264_A4722 (227 aa).

The protein belongs to the UPF0173 family.

The polypeptide is UPF0173 metal-dependent hydrolase BCB4264_A4722 (Bacillus cereus (strain B4264)).